The following is a 255-amino-acid chain: tRNA pseudouridine synthase A (255 aa).

Asp60 functions as the Nucleophile in the catalytic mechanism. Residue Tyr118 coordinates substrate.

It belongs to the tRNA pseudouridine synthase TruA family. Homodimer.

It carries out the reaction uridine(38/39/40) in tRNA = pseudouridine(38/39/40) in tRNA. Functionally, formation of pseudouridine at positions 38, 39 and 40 in the anticodon stem and loop of transfer RNAs. In Leuconostoc mesenteroides subsp. mesenteroides (strain ATCC 8293 / DSM 20343 / BCRC 11652 / CCM 1803 / JCM 6124 / NCDO 523 / NBRC 100496 / NCIMB 8023 / NCTC 12954 / NRRL B-1118 / 37Y), this protein is tRNA pseudouridine synthase A.